The sequence spans 234 residues: UPF0309 protein lmo0025 (234 aa).

One can recognise an SIS domain in the interval 31 to 205; sequence VADSIMNDGI…ELMLEKGYTP (175 aa).

This sequence belongs to the UPF0309 family.

The chain is UPF0309 protein lmo0025 from Listeria monocytogenes serovar 1/2a (strain ATCC BAA-679 / EGD-e).